The chain runs to 219 residues: 7-cyano-7-deazaguanine synthase (219 aa).

Phe10–Leu20 contributes to the ATP binding site. Cys188, Cys196, Cys199, and Cys202 together coordinate Zn(2+).

Belongs to the QueC family. Zn(2+) is required as a cofactor.

The enzyme catalyses 7-carboxy-7-deazaguanine + NH4(+) + ATP = 7-cyano-7-deazaguanine + ADP + phosphate + H2O + H(+). The protein operates within purine metabolism; 7-cyano-7-deazaguanine biosynthesis. In terms of biological role, catalyzes the ATP-dependent conversion of 7-carboxy-7-deazaguanine (CDG) to 7-cyano-7-deazaguanine (preQ(0)). This is 7-cyano-7-deazaguanine synthase from Neisseria meningitidis serogroup C / serotype 2a (strain ATCC 700532 / DSM 15464 / FAM18).